Reading from the N-terminus, the 301-residue chain is GTPase Era (301 aa).

Residues 7–175 (YCGFIAIVGR…AAIVRKHLPE (169 aa)) enclose the Era-type G domain. The tract at residues 15-22 (GRPNVGKS) is G1. A GTP-binding site is contributed by 15–22 (GRPNVGKS). Positions 41 to 45 (QTTRH) are G2. Residues 62-65 (DTPG) form a G3 region. Residues 62–66 (DTPGL) and 124–127 (NKVD) contribute to the GTP site. Residues 124–127 (NKVD) form a G4 region. The segment at 154–156 (ISA) is G5. The region spanning 206–283 (LGAELPYSVT…HLELWVKVKS (78 aa)) is the KH type-2 domain.

The protein belongs to the TRAFAC class TrmE-Era-EngA-EngB-Septin-like GTPase superfamily. Era GTPase family. As to quaternary structure, monomer.

Its subcellular location is the cytoplasm. It localises to the cell inner membrane. Functionally, an essential GTPase that binds both GDP and GTP, with rapid nucleotide exchange. Plays a role in 16S rRNA processing and 30S ribosomal subunit biogenesis and possibly also in cell cycle regulation and energy metabolism. This Escherichia coli (strain K12 / DH10B) protein is GTPase Era.